We begin with the raw amino-acid sequence, 161 residues long: Phosphopantetheine adenylyltransferase (161 aa).

Ser9 is a binding site for substrate. ATP contacts are provided by residues 9–10 (SF) and His17. Substrate contacts are provided by Lys41, Leu73, and Lys87. Residues 88–90 (GLR), Glu98, and 122–128 (FSFLSSS) each bind ATP.

This sequence belongs to the bacterial CoaD family. In terms of assembly, homohexamer. The cofactor is Mg(2+).

The protein localises to the cytoplasm. It catalyses the reaction (R)-4'-phosphopantetheine + ATP + H(+) = 3'-dephospho-CoA + diphosphate. It functions in the pathway cofactor biosynthesis; coenzyme A biosynthesis; CoA from (R)-pantothenate: step 4/5. In terms of biological role, reversibly transfers an adenylyl group from ATP to 4'-phosphopantetheine, yielding dephospho-CoA (dPCoA) and pyrophosphate. The sequence is that of Phosphopantetheine adenylyltransferase from Nocardia farcinica (strain IFM 10152).